A 329-amino-acid polypeptide reads, in one-letter code: GTP 3',8-cyclase (329 aa).

The Radical SAM core domain maps to 8-229 (AFARTFYYLR…AGWQRRLPGR (222 aa)). R17 is a binding site for GTP. [4Fe-4S] cluster contacts are provided by C24 and C28. Y30 lines the S-adenosyl-L-methionine pocket. Residue C31 coordinates [4Fe-4S] cluster. Residue R68 participates in GTP binding. G72 is an S-adenosyl-L-methionine binding site. T99 contributes to the GTP binding site. S123 contributes to the S-adenosyl-L-methionine binding site. Residue K160 participates in GTP binding. M194 is a binding site for S-adenosyl-L-methionine. Positions 257 and 260 each coordinate [4Fe-4S] cluster. 262–264 (RLR) serves as a coordination point for GTP. C274 is a [4Fe-4S] cluster binding site.

This sequence belongs to the radical SAM superfamily. MoaA family. In terms of assembly, monomer and homodimer. [4Fe-4S] cluster serves as cofactor.

It catalyses the reaction GTP + AH2 + S-adenosyl-L-methionine = (8S)-3',8-cyclo-7,8-dihydroguanosine 5'-triphosphate + 5'-deoxyadenosine + L-methionine + A + H(+). Its pathway is cofactor biosynthesis; molybdopterin biosynthesis. Functionally, catalyzes the cyclization of GTP to (8S)-3',8-cyclo-7,8-dihydroguanosine 5'-triphosphate. This chain is GTP 3',8-cyclase, found in Edwardsiella ictaluri (strain 93-146).